A 623-amino-acid chain; its full sequence is Interferon-induced GTP-binding protein Mx3 (623 aa).

Residues 31 to 304 enclose the Dynamin-type G domain; the sequence is DLALPAIAVI…LVHHIEKSLP (274 aa). The tract at residues 41-48 is G1 motif; it reads GDQSSGKS. 41–48 contributes to the GTP binding site; that stretch reads GDQSSGKS. The tract at residues 66–68 is G2 motif; it reads VTR. Residues 142 to 145 form a G3 motif region; the sequence is DLPG. Residues 142–146 and 211–214 each bind GTP; these read DLPGI and TKPD. The tract at residues 211 to 214 is G4 motif; it reads TKPD. Residues 243-246 are G5 motif; it reads KCRG. One can recognise a GED domain in the interval 537–623; sequence LQEMMLHLKS…MKARSYLVEF (87 aa).

It belongs to the TRAFAC class dynamin-like GTPase superfamily. Dynamin/Fzo/YdjA family.

Its subcellular location is the cytoplasm. Functionally, does not inhibit strain RB-1 of the fish pathogen, infectious hematopoietic necrosis virus (IHNV). The polypeptide is Interferon-induced GTP-binding protein Mx3 (Oncorhynchus mykiss (Rainbow trout)).